We begin with the raw amino-acid sequence, 220 residues long: Iron-sulfur cluster repair protein YtfE (220 aa).

This sequence belongs to the RIC family. YtfE subfamily. Homodimer.

It is found in the cytoplasm. Functionally, di-iron-containing protein involved in the repair of iron-sulfur clusters damaged by oxidative and nitrosative stress conditions. The chain is Iron-sulfur cluster repair protein YtfE from Escherichia coli (strain SMS-3-5 / SECEC).